We begin with the raw amino-acid sequence, 167 residues long: Ubiquitin-fold modifier-conjugating enzyme 1 (167 aa).

Cys-116 acts as the Glycyl thioester intermediate in catalysis.

It belongs to the ubiquitin-conjugating enzyme family. UFC1 subfamily. In terms of assembly, interacts with UBA5 (via C-terminus). Interacts with UFL1. Interacts with UFM1.

Functionally, E2-like enzyme which specifically catalyzes the second step in ufmylation. Accepts the ubiquitin-like modifier UFM1 from the E1 enzyme UBA5 and forms an intermediate with UFM1 via a thioester linkage. Ufmylation is involved in various processes, such as ribosome recycling, response to DNA damage, interferon response or reticulophagy (also called ER-phagy). This Salmo salar (Atlantic salmon) protein is Ubiquitin-fold modifier-conjugating enzyme 1.